Consider the following 676-residue polypeptide: DNA ligase (676 aa).

NAD(+) contacts are provided by residues 39 to 43, 88 to 91, and E118; these read DYVYD and SLND. K120 functions as the N6-AMP-lysine intermediate in the catalytic mechanism. R141, E175, K291, and K315 together coordinate NAD(+). The Zn(2+) site is built by C409, C412, C427, and C432. One can recognise a BRCT domain in the interval 595–676; sequence EVESPFKDKT…MVDALDASHF (82 aa).

Belongs to the NAD-dependent DNA ligase family. LigA subfamily. Mg(2+) is required as a cofactor. Mn(2+) serves as cofactor.

The enzyme catalyses NAD(+) + (deoxyribonucleotide)n-3'-hydroxyl + 5'-phospho-(deoxyribonucleotide)m = (deoxyribonucleotide)n+m + AMP + beta-nicotinamide D-nucleotide.. In terms of biological role, DNA ligase that catalyzes the formation of phosphodiester linkages between 5'-phosphoryl and 3'-hydroxyl groups in double-stranded DNA using NAD as a coenzyme and as the energy source for the reaction. It is essential for DNA replication and repair of damaged DNA. In Enterococcus faecalis (strain ATCC 700802 / V583), this protein is DNA ligase.